Reading from the N-terminus, the 205-residue chain is Guanylate kinase (205 aa).

Residues 3-183 form the Guanylate kinase-like domain; sequence GFVLLISGPS…SYEALRAILI (181 aa). Residue 10–17 coordinates ATP; sequence GPSGAGKS.

It belongs to the guanylate kinase family.

The protein localises to the cytoplasm. It catalyses the reaction GMP + ATP = GDP + ADP. Functionally, essential for recycling GMP and indirectly, cGMP. This chain is Guanylate kinase, found in Campylobacter jejuni (strain RM1221).